We begin with the raw amino-acid sequence, 426 residues long: Enolase (426 aa).

Position 163 (Gln-163) interacts with (2R)-2-phosphoglycerate. Glu-205 (proton donor) is an active-site residue. Asp-242, Glu-285, and Asp-312 together coordinate Mg(2+). (2R)-2-phosphoglycerate contacts are provided by Lys-337, Arg-366, Ser-367, and Lys-388. Lys-337 functions as the Proton acceptor in the catalytic mechanism.

Belongs to the enolase family. In terms of assembly, component of the RNA degradosome, a multiprotein complex involved in RNA processing and mRNA degradation. The cofactor is Mg(2+).

The protein localises to the cytoplasm. It localises to the secreted. Its subcellular location is the cell surface. The catalysed reaction is (2R)-2-phosphoglycerate = phosphoenolpyruvate + H2O. It functions in the pathway carbohydrate degradation; glycolysis; pyruvate from D-glyceraldehyde 3-phosphate: step 4/5. In terms of biological role, catalyzes the reversible conversion of 2-phosphoglycerate (2-PG) into phosphoenolpyruvate (PEP). It is essential for the degradation of carbohydrates via glycolysis. This chain is Enolase, found in Nitrosococcus oceani (strain ATCC 19707 / BCRC 17464 / JCM 30415 / NCIMB 11848 / C-107).